The chain runs to 287 residues: Pyridoxal kinase PdxY (287 aa).

Substrate is bound by residues S9 and M44–Q45. The ATP site is built by D111, A142, E147, and K180. D221 is a substrate binding site.

Belongs to the pyridoxine kinase family. PdxY subfamily. As to quaternary structure, homodimer. The cofactor is Mg(2+).

It catalyses the reaction pyridoxal + ATP = pyridoxal 5'-phosphate + ADP + H(+). Its pathway is cofactor metabolism; pyridoxal 5'-phosphate salvage; pyridoxal 5'-phosphate from pyridoxal: step 1/1. Its function is as follows. Pyridoxal kinase involved in the salvage pathway of pyridoxal 5'-phosphate (PLP). Catalyzes the phosphorylation of pyridoxal to PLP. The chain is Pyridoxal kinase PdxY from Burkholderia pseudomallei (strain K96243).